The sequence spans 111 residues: uncharacterized protein (111 aa).

The chain crosses the membrane as a helical span at residues 64–86; sequence VLCWLVLPLYCCNLLNLFFNIFL.

The protein resides in the membrane. This is an uncharacterized protein from Saccharomyces cerevisiae (strain ATCC 204508 / S288c) (Baker's yeast).